A 798-amino-acid polypeptide reads, in one-letter code: Iron-regulated transcriptional activator AFT2 (798 aa).

Disordered regions lie at residues 142–274 (RSNK…KKLK), 331–365 (YPQP…QENN), 449–545 (NVDL…LPGS), 642–718 (QQQQ…NNIN), and 748–798 (QGNP…GPGW). Residues 153–165 (EIANTPSVTSYSP) show a composition bias toward polar residues. A compositionally biased stretch (low complexity) spans 193 to 223 (STQSTRSSSSSDGSSIVSFGSLTSQSSSTSL). The span at 256-274 (PVKRKNMKANTMKKSKKLK) shows a compositional bias: basic residues. The segment covering 449–460 (NVDLEQNGSNEN) has biased composition (polar residues). A compositionally biased stretch (low complexity) spans 476-517 (ENQFSYQSQIQNQRQNQNQNQGQNQNQNQSQSQTPGQNSNQN). Composition is skewed to polar residues over residues 518-543 (DSQT…NWLP) and 646-656 (PMFSMQNSGQQ). 2 stretches are compositionally biased toward low complexity: residues 657–695 (LPPL…TLNP) and 705–718 (NSTN…NNIN). Residues 748-773 (QGNPTNSNQSMVNSIMTTNSNKDGTA) are compositionally biased toward polar residues. The segment covering 774–789 (TSNNNSSGNTSNNLLN) has biased composition (low complexity).

It localises to the nucleus. In terms of biological role, transcription factor involved in iron metabolism, oxidative stress, surface adhesion, hyphal development and virulence. Functions as a negative regulator of MRS4 expression through the CACCC AFT-type sequence in a gene dose-dependent fashion. Acts as a repressor in flocculation, plastic adhesion, and surface hydrophobicity. In Candida albicans (strain SC5314 / ATCC MYA-2876) (Yeast), this protein is Iron-regulated transcriptional activator AFT2 (AFT2).